Reading from the N-terminus, the 443-residue chain is dTDP-4-dehydro-6-deoxy-alpha-D-glucopyranose 2,3-dehydratase (443 aa).

DTDP-4-dehydro-6-deoxy-alpha-D-glucose-binding positions include tryptophan 35, 118–122 (TFSNY), serine 157, tryptophan 260, arginine 325, 341–343 (QCN), 346–347 (NL), and 377–380 (EGGR).

It belongs to the hexose 2,3-dehydratase family. Homodimer.

It catalyses the reaction dTDP-4-dehydro-6-deoxy-alpha-D-glucose = dTDP-3,4-didehydro-2,6-dideoxy-alpha-D-glucose + H2O. It functions in the pathway antibiotic biosynthesis; granaticin biosynthesis. Involved in the biosynthesis of the 2,6-deoxysugar, dTDP-L-rhodinose, attached to the benzoisochromane quinone chromophore to produce the aglycone antibiotics granaticin and granaticin B. Catalyzes the removal of the hydroxyl group at position C-2 of the hexose ring of dTDP-4-dehydro-6-deoxy-alpha-D-glucopyranose, and the oxidation of the hydroxyl group at position C-3 to form a carbonyl functionality. The product of the reaction, dTDP-2,6-dideoxy-D-glycero-hex-2-enos-4-ulose, is a highly unstable diketosugar, which spontaneously forms dTDP-3,4-didehydro-2,6-dideoxy-alpha-D-glucose. In Streptomyces violaceoruber, this protein is dTDP-4-dehydro-6-deoxy-alpha-D-glucopyranose 2,3-dehydratase.